The chain runs to 93 residues: Acylphosphatase (93 aa).

The Acylphosphatase-like domain occupies R7 to R93. Catalysis depends on residues R22 and N40.

The protein belongs to the acylphosphatase family.

It carries out the reaction an acyl phosphate + H2O = a carboxylate + phosphate + H(+). This Mycolicibacterium vanbaalenii (strain DSM 7251 / JCM 13017 / BCRC 16820 / KCTC 9966 / NRRL B-24157 / PYR-1) (Mycobacterium vanbaalenii) protein is Acylphosphatase (acyP).